The primary structure comprises 94 residues: Em protein CS41 (94 aa).

Basic and acidic residues-rich tracts occupy residues 1 to 16 (MASGQEKGRSELDSLA), 33 to 53 (EAQEKLAEGRSRGGQTRKEQM), and 74 to 94 (GGERAAREGIDIDESKFKTKS). A disordered region spans residues 1-94 (MASGQEKGRS…IDESKFKTKS (94 aa)).

It belongs to the small hydrophilic plant seed protein family.

Its function is as follows. It is thought to provide protection for the cytoplasm during the desiccation stage of embryo development. This Triticum aestivum (Wheat) protein is Em protein CS41 (EM).